Reading from the N-terminus, the 157-residue chain is S-ribosylhomocysteine lyase (157 aa).

Positions 54, 58, and 126 each coordinate Fe cation.

The protein belongs to the LuxS family. In terms of assembly, homodimer. Fe cation serves as cofactor.

It catalyses the reaction S-(5-deoxy-D-ribos-5-yl)-L-homocysteine = (S)-4,5-dihydroxypentane-2,3-dione + L-homocysteine. Its function is as follows. Involved in the synthesis of autoinducer 2 (AI-2) which is secreted by bacteria and is used to communicate both the cell density and the metabolic potential of the environment. The regulation of gene expression in response to changes in cell density is called quorum sensing. Catalyzes the transformation of S-ribosylhomocysteine (RHC) to homocysteine (HC) and 4,5-dihydroxy-2,3-pentadione (DPD). The sequence is that of S-ribosylhomocysteine lyase from Bacillus licheniformis (strain ATCC 14580 / DSM 13 / JCM 2505 / CCUG 7422 / NBRC 12200 / NCIMB 9375 / NCTC 10341 / NRRL NRS-1264 / Gibson 46).